The chain runs to 117 residues: Ribosomal silencing factor RsfS (117 aa).

This sequence belongs to the Iojap/RsfS family. As to quaternary structure, interacts with ribosomal protein uL14 (rplN).

Its subcellular location is the cytoplasm. Functions as a ribosomal silencing factor. Interacts with ribosomal protein uL14 (rplN), blocking formation of intersubunit bridge B8. Prevents association of the 30S and 50S ribosomal subunits and the formation of functional ribosomes, thus repressing translation. The polypeptide is Ribosomal silencing factor RsfS (Halalkalibacterium halodurans (strain ATCC BAA-125 / DSM 18197 / FERM 7344 / JCM 9153 / C-125) (Bacillus halodurans)).